A 380-amino-acid polypeptide reads, in one-letter code: Protein kinase ORF15 (380 aa).

The region spanning 93–371 is the Protein kinase domain; it reads FIPVKVAGCL…LLIAQLTKFI (279 aa). K118 is a binding site for ATP. The active-site Proton acceptor is D217.

The protein belongs to the protein kinase superfamily. Ser/Thr protein kinase family.

The catalysed reaction is L-seryl-[protein] + ATP = O-phospho-L-seryl-[protein] + ADP + H(+). It carries out the reaction L-threonyl-[protein] + ATP = O-phospho-L-threonyl-[protein] + ADP + H(+). The chain is Protein kinase ORF15 (ORF15) from Ictalurid herpesvirus 1 (strain Auburn) (IcHV-1).